Here is a 424-residue protein sequence, read N- to C-terminus: Protein CapL (424 aa).

It belongs to the UDP-glucose/GDP-mannose dehydrogenase family.

Its pathway is capsule biogenesis; capsule polysaccharide biosynthesis. In terms of biological role, required for the biosynthesis of type 1 capsular polysaccharide. In Staphylococcus aureus, this protein is Protein CapL (capL).